The primary structure comprises 372 residues: Enolase (372 aa).

2 residues coordinate substrate: histidine 95 and glutamate 104. The Proton donor role is filled by glutamate 147. 3 residues coordinate Mg(2+): aspartate 182, glutamate 232, and aspartate 257. Substrate-binding residues include glutamate 232 and aspartate 257. Lysine 282 acts as the Proton acceptor in catalysis. Residues 309 to 312 and lysine 333 contribute to the substrate site; that span reads SHRS.

Belongs to the enolase family. In terms of assembly, homodimer. It depends on Mg(2+) as a cofactor.

It is found in the cytoplasm. It carries out the reaction (2R)-2-phosphoglycerate = phosphoenolpyruvate + H2O. Its pathway is carbohydrate degradation; glycolysis; pyruvate from D-glyceraldehyde 3-phosphate: step 4/5. In Chlamydomonas reinhardtii (Chlamydomonas smithii), this protein is Enolase (ENO).